Consider the following 594-residue polypeptide: Aspartate--tRNA(Asp/Asn) ligase (594 aa).

Residue E175 coordinates L-aspartate. The interval 199–202 (QLFK) is aspartate. R221 is a binding site for L-aspartate. Residues 221 to 223 (RDE) and Q230 each bind ATP. H446 is a binding site for L-aspartate. Residue E492 coordinates ATP. Position 499 (R499) interacts with L-aspartate. Residue 544–547 (GFDR) coordinates ATP.

The protein belongs to the class-II aminoacyl-tRNA synthetase family. Type 1 subfamily. Homodimer.

It is found in the cytoplasm. The enzyme catalyses tRNA(Asx) + L-aspartate + ATP = L-aspartyl-tRNA(Asx) + AMP + diphosphate. Aspartyl-tRNA synthetase with relaxed tRNA specificity since it is able to aspartylate not only its cognate tRNA(Asp) but also tRNA(Asn). Reaction proceeds in two steps: L-aspartate is first activated by ATP to form Asp-AMP and then transferred to the acceptor end of tRNA(Asp/Asn). The chain is Aspartate--tRNA(Asp/Asn) ligase from Hydrogenobaculum sp. (strain Y04AAS1).